A 908-amino-acid chain; its full sequence is DNA mismatch repair protein MutS (908 aa).

629 to 636 serves as a coordination point for ATP; the sequence is GPNMAGKS. Residues 822–863 are disordered; sequence ADEADGAPSEDPPSEDPPSGDGVRAKKGEADAVPDLEDSQAN.

It belongs to the DNA mismatch repair MutS family.

Its function is as follows. This protein is involved in the repair of mismatches in DNA. It is possible that it carries out the mismatch recognition step. This protein has a weak ATPase activity. This is DNA mismatch repair protein MutS from Salinibacter ruber (strain DSM 13855 / M31).